The primary structure comprises 710 residues: FAST kinase domain-containing protein 2, mitochondrial (710 aa).

Residues Ser-126 and Ser-140 each carry the phosphoserine modification. Residues 634-691 enclose the RAP domain; that stretch reads VAVLCVSRSAYCLGSSHPRGFLAMKMRHLNAMGFHVILVNNWEMDKLEMEDAVTFLKT. Ser-708 bears the Phosphoserine mark.

It belongs to the FAST kinase family. In terms of assembly, monomer. Found in a complex with GRSF1, DDX28, DHX30 and FASTKD5. Associates with the 16S mitochondrial rRNA (16S mt-rRNA). Forms a regulatory protein-RNA complex, consisting of RCC1L, NGRN, RPUSD3, RPUSD4, TRUB2, FASTKD2 and 16S mt-rRNA. As to expression, expression detected in spleen, thymus, testis, ovary, colon, heart, smooth muscle, kidney, brain, lung, liver and white adipose tissue with highest expression in heart, smooth muscle and thyroid.

The protein localises to the mitochondrion matrix. The protein resides in the mitochondrion nucleoid. In terms of biological role, plays an important role in assembly of the mitochondrial large ribosomal subunit. As a component of a functional protein-RNA module, consisting of RCC1L, NGRN, RPUSD3, RPUSD4, TRUB2, FASTKD2 and 16S mitochondrial ribosomal RNA (16S mt-rRNA), controls 16S mt-rRNA abundance and is required for intra-mitochondrial translation. May play a role in mitochondrial apoptosis. This is FAST kinase domain-containing protein 2, mitochondrial from Homo sapiens (Human).